The primary structure comprises 1104 residues: General transcription factor II-I repeat domain-containing protein 1 (1104 aa).

Glycyl lysine isopeptide (Lys-Gly) (interchain with G-Cter in SUMO2) cross-links involve residues lysine 27, lysine 184, lysine 212, lysine 225, lysine 238, lysine 271, lysine 337, lysine 436, lysine 439, and lysine 443. A GTF2I-like 1 repeat occupies 119–213; that stretch reads LEQCSDVYLL…PDDGGQDTKA (95 aa). Residues 342–436 form a GTF2I-like 2 repeat; that stretch reads IKEMEDINTL…FDERIFTGNK (95 aa). Serine 448 bears the Phosphoserine mark. The interval 509–559 is disordered; it reads SDPSPTSEEMTDSLPGHLPSEDSGYGMEMPADKGPSEEPWSEERPAEESPG. Positions 538-555 are enriched in basic and acidic residues; that stretch reads PADKGPSEEPWSEERPAE. The stretch at 556–650 is one GTF2I-like 3 repeat; the sequence is ESPGDVIRPL…ELLTDGVKEP (95 aa). Residues lysine 567, lysine 579, lysine 588, lysine 622, lysine 638, lysine 669, lysine 709, lysine 717, lysine 757, lysine 759, and lysine 772 each participate in a glycyl lysine isopeptide (Lys-Gly) (interchain with G-Cter in SUMO2) cross-link. The GTF2I-like 4 repeat unit spans residues 681–775; sequence LSRIDIANTL…FQGLIPKPET (95 aa). Positions 783–802 are disordered; sequence EAGKTTRPRRLQQDTWQPDE. Residues 805–899 form a GTF2I-like 5 repeat; the sequence is ANRLGEKVIL…LQPFAEVCND (95 aa). Residues lysine 841 and lysine 901 each participate in a glycyl lysine isopeptide (Lys-Gly) (interchain with G-Cter in SUMO2) cross-link. The GTF2I-like 6 repeat unit spans residues 908 to 1002; that stretch reads SNKLGKKVIL…LQPFGDVCNN (95 aa). Disordered regions lie at residues 1001-1044 and 1058-1104; these read NNAK…VAST and LHPN…LPTR. The Nuclear localization signal signature appears at 1012 to 1019; the sequence is PKRKRKRV. Low complexity predominate over residues 1021 to 1043; the sequence is EGNSVSSSSSSSSSSSNPESVAS.

This sequence belongs to the TFII-I family. Interacts with the retinoblastoma protein (RB1) via its C-terminus. As to expression, widely expressed.

It localises to the nucleus. Its function is as follows. May be a transcription regulator involved in cell-cycle progression and skeletal muscle differentiation. May repress GTF2I transcriptional functions, by preventing its nuclear residency, or by inhibiting its transcriptional activation. May contribute to slow-twitch fiber type specificity during myogenesis and in regenerating muscles. Binds troponin I slow-muscle fiber enhancer (USE B1). Binds specifically and with high affinity to the EFG sequences derived from the early enhancer of HOXC8. The protein is General transcription factor II-I repeat domain-containing protein 1 (Gtf2ird1) of Mus musculus (Mouse).